The sequence spans 158 residues: Leptin-B (158 aa).

Positions 1–19 (MYMPLALVYASFLTLPAST) are cleaved as a signal peptide. Cys-114 and Cys-158 are joined by a disulfide.

Belongs to the leptin family. In terms of tissue distribution, highly expressed in the brain and eye. Expressed at low levels in muscle and skin.

Its subcellular location is the secreted. In terms of biological role, may function as part of a signaling pathway that acts to regulate the size of the body fat depot. The polypeptide is Leptin-B (Oryzias latipes (Japanese rice fish)).